The primary structure comprises 391 residues: Digeranylgeranylglycerophospholipid reductase (391 aa).

Residues Gly18, Glu37, Cys48, Ala49, Ala51, Arg98, Ala122, Asp279, Gly291, and Ile292 each contribute to the FAD site.

The protein belongs to the geranylgeranyl reductase family. DGGGPL reductase subfamily. It depends on FAD as a cofactor.

It catalyses the reaction a 2,3-bis-O-phytanyl-sn-glycerol 1-phospholipid + 8 A = a 2,3-bis-O-(geranylgeranyl)-sn-glycerol 1-phospholipid + 8 AH2. The enzyme catalyses 2,3-bis-O-(phytanyl)-sn-glycerol 1-phosphate + 8 A = 2,3-bis-O-(geranylgeranyl)-sn-glycerol 1-phosphate + 8 AH2. The catalysed reaction is CDP-2,3-bis-O-(geranylgeranyl)-sn-glycerol + 8 AH2 = CDP-2,3-bis-O-(phytanyl)-sn-glycerol + 8 A. It carries out the reaction archaetidylserine + 8 AH2 = 2,3-bis-O-phytanyl-sn-glycero-3-phospho-L-serine + 8 A. It functions in the pathway membrane lipid metabolism; glycerophospholipid metabolism. Its function is as follows. Is involved in the reduction of 2,3-digeranylgeranylglycerophospholipids (unsaturated archaeols) into 2,3-diphytanylglycerophospholipids (saturated archaeols) in the biosynthesis of archaeal membrane lipids. Catalyzes the formation of archaetidic acid (2,3-di-O-phytanyl-sn-glyceryl phosphate) from 2,3-di-O-geranylgeranylglyceryl phosphate (DGGGP) via the hydrogenation of each double bond of the isoprenoid chains. Is also probably able to reduce double bonds of geranyl groups in CDP-2,3-bis-O-(geranylgeranyl)-sn-glycerol and archaetidylserine, thus acting at various stages in the biosynthesis of archaeal membrane lipids. The protein is Digeranylgeranylglycerophospholipid reductase of Methanocaldococcus jannaschii (strain ATCC 43067 / DSM 2661 / JAL-1 / JCM 10045 / NBRC 100440) (Methanococcus jannaschii).